Here is a 151-residue protein sequence, read N- to C-terminus: Large ribosomal subunit protein uL15 (151 aa).

Residues 1–57 (MTLRLDSLKANKGARRRKLRKGRGIAAGQGASCGFGMRGQKSRSGRPTRPGFEGGQM) form a disordered region. The segment covering 12 to 23 (KGARRRKLRKGR) has biased composition (basic residues). Residues 25 to 37 (IAAGQGASCGFGM) are compositionally biased toward gly residues.

The protein belongs to the universal ribosomal protein uL15 family. In terms of assembly, part of the 50S ribosomal subunit.

Binds to the 23S rRNA. The chain is Large ribosomal subunit protein uL15 from Synechococcus sp. (strain CC9902).